Consider the following 205-residue polypeptide: Lymphotoxin-alpha (205 aa).

The first 34 residues, 1-34 (MTPPERLFLPRVRGTTLHLLLLGLLLVLLPGAQG), serve as a signal peptide directing secretion. An O-linked (GalNAc...) threonine glycan is attached at Thr41. The 143-residue stretch at 63–205 (PAAHLIGDPS…STVFFGAFAL (143 aa)) folds into the THD domain. Asn96 carries N-linked (GlcNAc...) asparagine glycosylation.

This sequence belongs to the tumor necrosis factor family. In terms of assembly, homotrimer, and heterotrimer of either two LTB and one LTA subunits or (less prevalent) two LTA and one LTB subunits. Interacts with TNFRSF14.

The protein localises to the secreted. The protein resides in the membrane. Functionally, cytokine that in its homotrimeric form binds to TNFRSF1A/TNFR1, TNFRSF1B/TNFBR and TNFRSF14/HVEM. In its heterotrimeric form with LTB binds to TNFRSF3/LTBR. Lymphotoxin is produced by lymphocytes and is cytotoxic for a wide range of tumor cells in vitro and in vivo. In Pan troglodytes (Chimpanzee), this protein is Lymphotoxin-alpha (LTA).